The sequence spans 209 residues: Ribosomal RNA large subunit methyltransferase E (209 aa).

Positions 63, 65, 83, 99, and 124 each coordinate S-adenosyl-L-methionine. The active-site Proton acceptor is Lys-164. In terms of domain architecture, TRAM spans 191–209 (EASRGRSREVYIVAMGYMG).

Belongs to the class I-like SAM-binding methyltransferase superfamily. RNA methyltransferase RlmE family.

It is found in the cytoplasm. It catalyses the reaction uridine(2552) in 23S rRNA + S-adenosyl-L-methionine = 2'-O-methyluridine(2552) in 23S rRNA + S-adenosyl-L-homocysteine + H(+). In terms of biological role, specifically methylates the uridine in position 2552 of 23S rRNA at the 2'-O position of the ribose in the fully assembled 50S ribosomal subunit. The chain is Ribosomal RNA large subunit methyltransferase E from Histophilus somni (strain 129Pt) (Haemophilus somnus).